Consider the following 1013-residue polypeptide: Lysosomal alpha-mannosidase (1013 aa).

The N-terminal stretch at 1 to 49 (MGTGPLTSGVRAGGGNTGWLWMSSCNLGSPVLPISFLFWLLLAAPGARA) is a signal peptide. 2 disulfides stabilise this stretch: Cys-55–Cys-358 and Cys-268–Cys-273. Positions 72, 74, and 196 each coordinate Zn(2+). Asp-196 serves as the catalytic Nucleophile. Residues Asn-310, Asn-345, and Asn-367 are each glycosylated (N-linked (GlcNAc...) asparagine). Residues Cys-412 and Cys-472 are joined by a disulfide bond. Zn(2+) is bound at residue His-446. N-linked (GlcNAc...) asparagine glycosylation is found at Asn-489, Asn-497, Asn-544, Asn-633, Asn-646, Asn-693, Asn-767, and Asn-931. Cys-493 and Cys-501 form a disulfide bridge.

Belongs to the glycosyl hydrolase 38 family. It depends on Zn(2+) as a cofactor.

The protein resides in the lysosome. It catalyses the reaction Hydrolysis of terminal, non-reducing alpha-D-mannose residues in alpha-D-mannosides.. Functionally, necessary for the catabolism of N-linked carbohydrates released during glycoprotein turnover. The sequence is that of Lysosomal alpha-mannosidase (Man2b1) from Mus musculus (Mouse).